Here is a 274-residue protein sequence, read N- to C-terminus: Probable cyclic nucleotide phosphodiesterase RPA0124 (274 aa).

Fe cation is bound by residues D8, H10, D49, N79, H155, H194, and H196. Residues H10, D49, and 79–80 each bind AMP; that span reads NH. H196 serves as a coordination point for AMP.

The protein belongs to the cyclic nucleotide phosphodiesterase class-III family. Fe(2+) is required as a cofactor.

This is Probable cyclic nucleotide phosphodiesterase RPA0124 from Rhodopseudomonas palustris (strain ATCC BAA-98 / CGA009).